Consider the following 353-residue polypeptide: Abasic site processing protein HMCES (353 aa).

C2 (nucleophile) is an active-site residue. C2 carries the post-translational modification Thiazolidine linkage to a ring-opened DNA abasic site. The active site involves E127. Glycyl lysine isopeptide (Lys-Gly) (interchain with G-Cter in SUMO2) cross-links involve residues K148 and K151. S160 carries the phosphoserine modification. Glycyl lysine isopeptide (Lys-Gly) (interchain with G-Cter in SUMO2) cross-links involve residues K274 and K275. The tract at residues 292 to 353 (TKSPKKEVPD…DEPMAKKPNS (62 aa)) is disordered. At S294 the chain carries Phosphoserine. The segment covering 295-307 (PKKEVPDSPKKDA) has biased composition (basic and acidic residues). A Glycyl lysine isopeptide (Lys-Gly) (interchain with G-Cter in SUMO2) cross-link involves residue K305. S321 bears the Phosphoserine mark. The PIP-box motif lies at 332 to 338 (SFLDRWL). Basic and acidic residues predominate over residues 336–353 (RWLKQEKEDEPMAKKPNS). Residues K339 and K342 each participate in a glycyl lysine isopeptide (Lys-Gly) (interchain with G-Cter in SUMO2) cross-link.

It belongs to the SOS response-associated peptidase family. As to quaternary structure, interacts (via PIP-box motif) with PCNA. As to expression, expressed in embryonic stem cells.

The protein localises to the chromosome. Its activity is regulated as follows. Formation and reversal of DNA-protein cross-link depends on DNA context. Catalyzes formation of the thiazolidine linkage in presence of abasic sites in single-stranded DNA. Mediates the reversal of the thiazolidine cross-link in presence of double stranded DNA. Functionally, sensor of abasic sites in single-stranded DNA (ssDNA) required to preserve genome integrity by promoting error-free repair of abasic sites. Acts as an enzyme that recognizes and binds abasic sites in ssDNA at replication forks and chemically modifies the lesion by forming a covalent cross-link with DNA: forms a stable thiazolidine linkage between a ring-opened abasic site and the alpha-amino and sulfhydryl substituents of its N-terminal catalytic cysteine residue. Promotes error-free repair by protecting abasic sites from translesion synthesis (TLS) polymerases and endonucleases that are error-prone and would generate mutations and double-strand breaks. The HMCES DNA-protein cross-link is then either reversed or degraded. HMCES is able to catalyze the reversal of its thiazolidine cross-link and cycle between a cross-link and a non-cross-linked state depending on DNA context: mediates self-reversal of the thiazolidine cross-link in double stranded DNA, allowing APEX1 to initiate downstream repair of abasic sites. The HMCES DNA-protein cross-link can also be degraded by the SPRTN metalloprotease following unfolding by the BRIP1/FANCJ helicase. Has preference for ssDNA, but can also accommodate double-stranded DNA with 3' or 5' overhang (dsDNA), and dsDNA-ssDNA 3' junction. Plays a protective role during somatic hypermutation of immunoglobulin genes in B-cells: acts via its ability to form covalent cross-links with abasic sites, thereby limiting the accumulation of deletions in somatic hypermutation target regions. Also involved in class switch recombination (CSR) in B-cells independently of the formation of a DNA-protein cross-link: acts by binding and protecting ssDNA overhangs to promote DNA double-strand break repair through the microhomology-mediated alternative-end-joining (Alt-EJ) pathway. Acts as a protease: mediates autocatalytic processing of its N-terminal methionine in order to expose the catalytic cysteine. This is Abasic site processing protein HMCES from Mus musculus (Mouse).